A 318-amino-acid chain; its full sequence is SPX domain-containing protein 4 (318 aa).

The region spanning 1-187 (MKFGKEFRTH…GGLLRLPFTQ (187 aa)) is the SPX domain. Positions 226-237 (SAVQAHSSSHQH) are enriched in low complexity. Disordered stretches follow at residues 226 to 247 (SAVQAHSSSHQHNSPRISAETS) and 284 to 318 (SSLLQNEDDETVTAENSPNSGNKDDSEKEDTGPSH). The span at 305-318 (NKDDSEKEDTGPSH) shows a compositional bias: basic and acidic residues.

The protein is SPX domain-containing protein 4 (SPX4) of Arabidopsis thaliana (Mouse-ear cress).